We begin with the raw amino-acid sequence, 382 residues long: Anhydro-N-acetylmuramic acid kinase (382 aa).

Position 22 to 29 (22 to 29 (GTSMDGVD)) interacts with ATP.

This sequence belongs to the anhydro-N-acetylmuramic acid kinase family.

It catalyses the reaction 1,6-anhydro-N-acetyl-beta-muramate + ATP + H2O = N-acetyl-D-muramate 6-phosphate + ADP + H(+). It functions in the pathway amino-sugar metabolism; 1,6-anhydro-N-acetylmuramate degradation. The protein operates within cell wall biogenesis; peptidoglycan recycling. Functionally, catalyzes the specific phosphorylation of 1,6-anhydro-N-acetylmuramic acid (anhMurNAc) with the simultaneous cleavage of the 1,6-anhydro ring, generating MurNAc-6-P. Is required for the utilization of anhMurNAc either imported from the medium or derived from its own cell wall murein, and thus plays a role in cell wall recycling. The chain is Anhydro-N-acetylmuramic acid kinase from Burkholderia ambifaria (strain ATCC BAA-244 / DSM 16087 / CCUG 44356 / LMG 19182 / AMMD) (Burkholderia cepacia (strain AMMD)).